We begin with the raw amino-acid sequence, 28 residues long: Kappa-buthitoxin-Tt2b (28 aa).

Disulfide bonds link C2–C24, C7–C20, and C11–C26.

In terms of tissue distribution, expressed by the venom gland.

It is found in the secreted. Blocks potassium channels Shaker-IR (with inactivation domain removed) and hKv1.2/KCNA2. The sequence is that of Kappa-buthitoxin-Tt2b from Tityus trivittatus (Argentinean scorpion).